Reading from the N-terminus, the 203-residue chain is LexA repressor (203 aa).

The H-T-H motif DNA-binding region spans 29-49 (VREIGQEVGLSSSSTVHGYLK). Catalysis depends on for autocatalytic cleavage activity residues Ser126 and Lys163.

This sequence belongs to the peptidase S24 family. In terms of assembly, homodimer.

It carries out the reaction Hydrolysis of Ala-|-Gly bond in repressor LexA.. In terms of biological role, represses a number of genes involved in the response to DNA damage (SOS response), including recA and lexA. In the presence of single-stranded DNA, RecA interacts with LexA causing an autocatalytic cleavage which disrupts the DNA-binding part of LexA, leading to derepression of the SOS regulon and eventually DNA repair. This chain is LexA repressor, found in Pelotomaculum thermopropionicum (strain DSM 13744 / JCM 10971 / SI).